Consider the following 297-residue polypeptide: Vacuolar protein sorting-associated protein 26C (297 aa).

This sequence belongs to the VPS26 family. As to quaternary structure, component of the commander complex that is essential for endosomal recycling of transmembrane cargos; the commander complex is composed of the CCC subcomplex and the retriever subcomplex. Component of the heterotrimeric retriever complex consisting of VPS26C, VPS29 and VPS35L; within the complex interacts with VPS35L. Interacts with SNX17 (via C-terminus); the interaction is direct and associates SNX17 with the retriever complex. Interacts with SNX31; the interaction is direct. In terms of tissue distribution, ubiquitously expressed.

It localises to the endosome. Its function is as follows. Component of the commander complex that is essential for endosomal recycling of transmembrane cargos; the commander complex is composed of the CCC subcomplex and the retriever subcomplex. Component of the retriever complex, which is a heterotrimeric complex related to retromer cargo-selective complex (CSC) and essential for retromer-independent retrieval and recycling of numerous cargos such as integrin alpha-5/beta-1 (ITGA5:ITGB1). The recruitment of the retriever complex to the endosomal membrane involves CCC and WASH complexes. In the endosomes, drives the retriever and recycling of NxxY-motif-containing cargo proteins by coupling to SNX17, a cargo essential for the homeostatic maintenance of numerous cell surface proteins associated with processes that include cell migration, cell adhesion, nutrient supply and cell signaling. Functionally, (Microbial infection) The heterotrimeric retriever complex, in collaboration with the CCC complex, mediates the exit of human papillomavirus to the cell surface. The protein is Vacuolar protein sorting-associated protein 26C of Homo sapiens (Human).